The primary structure comprises 106 residues: Immunoglobulin lambda constant 7 (106 aa).

An Ig-like domain is found at 7-101 (PSVTLFPPSS…EGSTVEKTVA (95 aa)). Residues Cys28 and Cys87 are joined by a disulfide bond.

In terms of assembly, immunoglobulins are composed of two identical heavy chains and two identical light chains; disulfide-linked.

It is found in the secreted. It localises to the cell membrane. Constant region of immunoglobulin light chains. Immunoglobulins, also known as antibodies, are membrane-bound or secreted glycoproteins produced by B lymphocytes. In the recognition phase of humoral immunity, the membrane-bound immunoglobulins serve as receptors which, upon binding of a specific antigen, trigger the clonal expansion and differentiation of B lymphocytes into immunoglobulins-secreting plasma cells. Secreted immunoglobulins mediate the effector phase of humoral immunity, which results in the elimination of bound antigens. The antigen binding site is formed by the variable domain of one heavy chain, together with that of its associated light chain. Thus, each immunoglobulin has two antigen binding sites with remarkable affinity for a particular antigen. The variable domains are assembled by a process called V-(D)-J rearrangement and can then be subjected to somatic hypermutations which, after exposure to antigen and selection, allow affinity maturation for a particular antigen. The protein is Immunoglobulin lambda constant 7 of Homo sapiens (Human).